The primary structure comprises 157 residues: Crossover junction endodeoxyribonuclease RuvC (157 aa).

Residues Asp-7, Glu-67, and Asp-140 contribute to the active site. Mg(2+)-binding residues include Asp-7, Glu-67, and Asp-140.

The protein belongs to the RuvC family. In terms of assembly, homodimer which binds Holliday junction (HJ) DNA. The HJ becomes 2-fold symmetrical on binding to RuvC with unstacked arms; it has a different conformation from HJ DNA in complex with RuvA. In the full resolvosome a probable DNA-RuvA(4)-RuvB(12)-RuvC(2) complex forms which resolves the HJ. Mg(2+) serves as cofactor.

Its subcellular location is the cytoplasm. It carries out the reaction Endonucleolytic cleavage at a junction such as a reciprocal single-stranded crossover between two homologous DNA duplexes (Holliday junction).. In terms of biological role, the RuvA-RuvB-RuvC complex processes Holliday junction (HJ) DNA during genetic recombination and DNA repair. Endonuclease that resolves HJ intermediates. Cleaves cruciform DNA by making single-stranded nicks across the HJ at symmetrical positions within the homologous arms, yielding a 5'-phosphate and a 3'-hydroxyl group; requires a central core of homology in the junction. The consensus cleavage sequence is 5'-(A/T)TT(C/G)-3'. Cleavage occurs on the 3'-side of the TT dinucleotide at the point of strand exchange. HJ branch migration catalyzed by RuvA-RuvB allows RuvC to scan DNA until it finds its consensus sequence, where it cleaves and resolves the cruciform DNA. This is Crossover junction endodeoxyribonuclease RuvC from Rickettsia africae (strain ESF-5).